Reading from the N-terminus, the 365-residue chain is Phospho-N-acetylmuramoyl-pentapeptide-transferase (365 aa).

Transmembrane regions (helical) follow at residues 22-42, 74-94, 95-115, 134-154, 168-188, 201-221, 240-260, 267-287, 292-312, and 342-362; these read YISV…LALG, TMGG…WGDL, TSIY…IGFF, KFAL…YLLS, SLYI…IING, GLAI…AYIE, LAEV…FLWF, VFMG…IAVM, LIFF…MLQV, and KVVI…LAAI.

The protein belongs to the glycosyltransferase 4 family. MraY subfamily. It depends on Mg(2+) as a cofactor.

The protein resides in the cell inner membrane. It catalyses the reaction UDP-N-acetyl-alpha-D-muramoyl-L-alanyl-gamma-D-glutamyl-meso-2,6-diaminopimeloyl-D-alanyl-D-alanine + di-trans,octa-cis-undecaprenyl phosphate = di-trans,octa-cis-undecaprenyl diphospho-N-acetyl-alpha-D-muramoyl-L-alanyl-D-glutamyl-meso-2,6-diaminopimeloyl-D-alanyl-D-alanine + UMP. It participates in cell wall biogenesis; peptidoglycan biosynthesis. Catalyzes the initial step of the lipid cycle reactions in the biosynthesis of the cell wall peptidoglycan: transfers peptidoglycan precursor phospho-MurNAc-pentapeptide from UDP-MurNAc-pentapeptide onto the lipid carrier undecaprenyl phosphate, yielding undecaprenyl-pyrophosphoryl-MurNAc-pentapeptide, known as lipid I. This chain is Phospho-N-acetylmuramoyl-pentapeptide-transferase, found in Francisella tularensis subsp. mediasiatica (strain FSC147).